The primary structure comprises 181 residues: Probable cobalt-precorrin-6B C(15)-methyltransferase (decarboxylating) (181 aa).

S-adenosyl-L-methionine-binding positions include T16, 40 to 44, D61, and A89; that span reads GCGSG.

This sequence belongs to the methyltransferase superfamily. Archaeal-type CbiT family.

The enzyme catalyses Co-precorrin-6B + S-adenosyl-L-methionine = Co-precorrin-7 + S-adenosyl-L-homocysteine + CO2. It participates in cofactor biosynthesis; adenosylcobalamin biosynthesis; cob(II)yrinate a,c-diamide from sirohydrochlorin (anaerobic route): step 8/10. Its function is as follows. Catalyzes the methylation of C-15 in cobalt-precorrin-6B followed by the decarboxylation of C-12 to form cobalt-precorrin-7. This Methanococcus maripaludis (strain DSM 14266 / JCM 13030 / NBRC 101832 / S2 / LL) protein is Probable cobalt-precorrin-6B C(15)-methyltransferase (decarboxylating).